The sequence spans 876 residues: Alanine--tRNA ligase (876 aa).

N6-acetyllysine is present on Lys74. Zn(2+) is bound by residues His564, His568, Cys666, and His670.

The protein belongs to the class-II aminoacyl-tRNA synthetase family. As to quaternary structure, homotetramer. Zn(2+) serves as cofactor.

The protein localises to the cytoplasm. The enzyme catalyses tRNA(Ala) + L-alanine + ATP = L-alanyl-tRNA(Ala) + AMP + diphosphate. In terms of biological role, catalyzes the attachment of alanine to tRNA(Ala) in a two-step reaction: alanine is first activated by ATP to form Ala-AMP and then transferred to the acceptor end of tRNA(Ala). Also edits incorrectly charged Ser-tRNA(Ala) and Gly-tRNA(Ala) via its editing domain. The polypeptide is Alanine--tRNA ligase (Shigella dysenteriae serotype 1 (strain Sd197)).